Here is a 207-residue protein sequence, read N- to C-terminus: 2,3-bisphosphoglycerate-dependent phosphoglycerate mutase (207 aa).

Residues 10 to 17 (RHGQSEWN), 23 to 24 (TG), R62, 89 to 92 (ERDY), K100, 116 to 117 (RR), and 160 to 161 (GN) each bind substrate. Residue H11 is the Tele-phosphohistidine intermediate of the active site. E89 acts as the Proton donor/acceptor in catalysis.

This sequence belongs to the phosphoglycerate mutase family. BPG-dependent PGAM subfamily. In terms of assembly, homodimer.

The catalysed reaction is (2R)-2-phosphoglycerate = (2R)-3-phosphoglycerate. It participates in carbohydrate degradation; glycolysis; pyruvate from D-glyceraldehyde 3-phosphate: step 3/5. Functionally, catalyzes the interconversion of 2-phosphoglycerate and 3-phosphoglycerate. The protein is 2,3-bisphosphoglycerate-dependent phosphoglycerate mutase of Afipia carboxidovorans (strain ATCC 49405 / DSM 1227 / KCTC 32145 / OM5) (Oligotropha carboxidovorans).